The sequence spans 133 residues: Salivary cystatin-L2 (133 aa).

The signal sequence occupies residues 1 to 18 (MTSSLALVLLLGGAAVCA). Residues 34-118 (DDPKYLELAH…RTCTAVIYEN (85 aa)) enclose the Cystatin domain.

The protein belongs to the cystatin family. Salivary gland, midgut and other tissues.

The protein localises to the secreted. Inhibitor of cysteine proteinases. Inhibits host cathepsin L (CTSL) and S (CTSS). Modulates production of various cytokines and chemokines in lipopolysaccharide (LPS)-stimulated mouse dendritic cell. Suppresses maturation of mouse bone-marrow-derived dendritic cells (BMDCs). Functionally, (Microbial infection) Modulates Borrelia miyamotoi-stimulated immune responses in mice by suppressing activities of host dendritic and T-cells. This is Salivary cystatin-L2 from Ixodes persulcatus (Taiga tick).